The chain runs to 187 residues: Casparian strip membrane protein 5 (187 aa).

Topologically, residues Met-1–Arg-24 are cytoplasmic. Residues Ile-25 to Ile-45 traverse the membrane as a helical segment. Topologically, residues Leu-46 to Thr-74 are extracellular. The chain crosses the membrane as a helical span at residues Phe-75–Phe-95. Residues Val-96–Arg-107 lie on the Cytoplasmic side of the membrane. A helical membrane pass occupies residues Ile-108 to Ala-128. Residues Ala-129–Ser-161 lie on the Extracellular side of the membrane. N-linked (GlcNAc...) asparagine glycosylation is present at Asn-140. A helical transmembrane segment spans residues Leu-162 to Ala-182. The Cytoplasmic segment spans residues Leu-183–His-187.

This sequence belongs to the Casparian strip membrane proteins (CASP) family. Homodimer and heterodimers with other CASP proteins. Interacts with CASP1, CASP3 and CASP4.

It is found in the cell membrane. Its function is as follows. Regulates membrane-cell wall junctions and localized cell wall deposition. Required for establishment of the Casparian strip membrane domain (CSD) and the subsequent formation of Casparian strips, a cell wall modification of the root endodermis that determines an apoplastic barrier between the intraorganismal apoplasm and the extraorganismal apoplasm and prevents lateral diffusion. In Arabidopsis thaliana (Mouse-ear cress), this protein is Casparian strip membrane protein 5 (CASP5).